The sequence spans 179 residues: Protein GrpE (179 aa).

This sequence belongs to the GrpE family. Homodimer.

It localises to the cytoplasm. Its function is as follows. Participates actively in the response to hyperosmotic and heat shock by preventing the aggregation of stress-denatured proteins, in association with DnaK and GrpE. It is the nucleotide exchange factor for DnaK and may function as a thermosensor. Unfolded proteins bind initially to DnaJ; upon interaction with the DnaJ-bound protein, DnaK hydrolyzes its bound ATP, resulting in the formation of a stable complex. GrpE releases ADP from DnaK; ATP binding to DnaK triggers the release of the substrate protein, thus completing the reaction cycle. Several rounds of ATP-dependent interactions between DnaJ, DnaK and GrpE are required for fully efficient folding. This chain is Protein GrpE, found in Rickettsia felis (strain ATCC VR-1525 / URRWXCal2) (Rickettsia azadi).